The following is a 114-amino-acid chain: Large ribosomal subunit protein eL31 (114 aa).

It belongs to the eukaryotic ribosomal protein eL31 family.

This Eremothecium gossypii (strain ATCC 10895 / CBS 109.51 / FGSC 9923 / NRRL Y-1056) (Yeast) protein is Large ribosomal subunit protein eL31 (RPL31).